Here is a 291-residue protein sequence, read N- to C-terminus: MPSLKDLKNRIASVKATQKITKAMKMVAAAKLRRAQEAAEAARPYSQRMAAVLSNIAQAVGADDSAPRLMTGTGKDDTHLLVVCTAERGLCGGFNSQIARHARDHVRKLLAQGKTVKIICVGKKGFDILRREFASLIIDRVDLREVKKIGFENADRIGHKVIELFDNGEFDVCTLFYSEFKSVISQIPTAQQLIPASAGEAVAEGASAIYEYEPDAAAILSDLIPRNISVQIFRALLENVAGEMGAKMSAMDNATRNAGEMINKLTLNYNRQRQAQITKELIEIISGAEAL.

The protein belongs to the ATPase gamma chain family. F-type ATPases have 2 components, CF(1) - the catalytic core - and CF(0) - the membrane proton channel. CF(1) has five subunits: alpha(3), beta(3), gamma(1), delta(1), epsilon(1). CF(0) has three main subunits: a, b and c.

Its subcellular location is the cell inner membrane. Functionally, produces ATP from ADP in the presence of a proton gradient across the membrane. The gamma chain is believed to be important in regulating ATPase activity and the flow of protons through the CF(0) complex. This is ATP synthase gamma chain from Sinorhizobium medicae (strain WSM419) (Ensifer medicae).